The following is a 428-amino-acid chain: UPF0597 protein Dde_0807 (428 aa).

This sequence belongs to the UPF0597 family.

In Oleidesulfovibrio alaskensis (strain ATCC BAA-1058 / DSM 17464 / G20) (Desulfovibrio alaskensis), this protein is UPF0597 protein Dde_0807.